The chain runs to 375 residues: tRNA(Met) cytidine acetate ligase (375 aa).

ATP contacts are provided by residues 7–20, Gly101, Asn151, and Arg176; that span reads VVEYNPFHNGHRYH.

This sequence belongs to the TmcAL family.

It is found in the cytoplasm. The catalysed reaction is cytidine(34) in elongator tRNA(Met) + acetate + ATP = N(4)-acetylcytidine(34) in elongator tRNA(Met) + AMP + diphosphate. Its function is as follows. Catalyzes the formation of N(4)-acetylcytidine (ac(4)C) at the wobble position of elongator tRNA(Met), using acetate and ATP as substrates. First activates an acetate ion to form acetyladenylate (Ac-AMP) and then transfers the acetyl group to tRNA to form ac(4)C34. The protein is tRNA(Met) cytidine acetate ligase of Limosilactobacillus fermentum (strain NBRC 3956 / LMG 18251) (Lactobacillus fermentum).